A 376-amino-acid polypeptide reads, in one-letter code: Heat-inducible transcription repressor HrcA (376 aa).

Belongs to the HrcA family.

Negative regulator of class I heat shock genes (grpE-dnaK-dnaJ and groELS operons). Prevents heat-shock induction of these operons. This is Heat-inducible transcription repressor HrcA from Nostoc punctiforme (strain ATCC 29133 / PCC 73102).